Consider the following 660-residue polypeptide: Bifunctional polymyxin resistance protein ArnA (660 aa).

The tract at residues 1 to 304 is formyltransferase ArnAFT; sequence MKAVIFAYHD…TLGLVAGARL (304 aa). H104 acts as the Proton donor; for formyltransferase activity in catalysis. (6R)-10-formyltetrahydrofolate contacts are provided by residues R114 and 136-140; that span reads VKRAD. Positions 314 to 660 are dehydrogenase ArnADH; sequence RRIRVLILGV…RSVDVAERAS (347 aa). Residues D347 and 368–369 each bind NAD(+); that span reads DI. UDP-alpha-D-glucuronate-binding positions include A393, Y398, and 432–433; that span reads TS. E434 (proton acceptor; for decarboxylase activity) is an active-site residue. UDP-alpha-D-glucuronate contacts are provided by residues R460, N492, 526–535, and Y613; that span reads KLIDGGQQKR. R619 functions as the Proton donor; for decarboxylase activity in the catalytic mechanism.

In the N-terminal section; belongs to the Fmt family. UDP-L-Ara4N formyltransferase subfamily. The protein in the C-terminal section; belongs to the NAD(P)-dependent epimerase/dehydratase family. UDP-glucuronic acid decarboxylase subfamily. As to quaternary structure, homohexamer, formed by a dimer of trimers.

The enzyme catalyses UDP-alpha-D-glucuronate + NAD(+) = UDP-beta-L-threo-pentopyranos-4-ulose + CO2 + NADH. It catalyses the reaction UDP-4-amino-4-deoxy-beta-L-arabinose + (6R)-10-formyltetrahydrofolate = UDP-4-deoxy-4-formamido-beta-L-arabinose + (6S)-5,6,7,8-tetrahydrofolate + H(+). It participates in nucleotide-sugar biosynthesis; UDP-4-deoxy-4-formamido-beta-L-arabinose biosynthesis; UDP-4-deoxy-4-formamido-beta-L-arabinose from UDP-alpha-D-glucuronate: step 1/3. Its pathway is nucleotide-sugar biosynthesis; UDP-4-deoxy-4-formamido-beta-L-arabinose biosynthesis; UDP-4-deoxy-4-formamido-beta-L-arabinose from UDP-alpha-D-glucuronate: step 3/3. The protein operates within bacterial outer membrane biogenesis; lipopolysaccharide biosynthesis. Its function is as follows. Bifunctional enzyme that catalyzes the oxidative decarboxylation of UDP-glucuronic acid (UDP-GlcUA) to UDP-4-keto-arabinose (UDP-Ara4O) and the addition of a formyl group to UDP-4-amino-4-deoxy-L-arabinose (UDP-L-Ara4N) to form UDP-L-4-formamido-arabinose (UDP-L-Ara4FN). The modified arabinose is attached to lipid A and is required for resistance to polymyxin and cationic antimicrobial peptides. The chain is Bifunctional polymyxin resistance protein ArnA from Salmonella newport (strain SL254).